Consider the following 259-residue polypeptide: Phosphoribosylaminoimidazole-succinocarboxamide synthase (259 aa).

The protein belongs to the SAICAR synthetase family.

It carries out the reaction 5-amino-1-(5-phospho-D-ribosyl)imidazole-4-carboxylate + L-aspartate + ATP = (2S)-2-[5-amino-1-(5-phospho-beta-D-ribosyl)imidazole-4-carboxamido]succinate + ADP + phosphate + 2 H(+). Its pathway is purine metabolism; IMP biosynthesis via de novo pathway; 5-amino-1-(5-phospho-D-ribosyl)imidazole-4-carboxamide from 5-amino-1-(5-phospho-D-ribosyl)imidazole-4-carboxylate: step 1/2. This chain is Phosphoribosylaminoimidazole-succinocarboxamide synthase, found in Hyphomonas neptunium (strain ATCC 15444).